We begin with the raw amino-acid sequence, 250 residues long: Ribose-5-phosphate isomerase A (250 aa).

Substrate contacts are provided by residues 33 to 36, 89 to 92, and 102 to 105; these read TGST, DGAD, and KGGG. The active-site Proton acceptor is the Glu111. Substrate is bound at residue Lys129.

Belongs to the ribose 5-phosphate isomerase family. In terms of assembly, homodimer.

It catalyses the reaction aldehydo-D-ribose 5-phosphate = D-ribulose 5-phosphate. It functions in the pathway carbohydrate degradation; pentose phosphate pathway; D-ribose 5-phosphate from D-ribulose 5-phosphate (non-oxidative stage): step 1/1. Catalyzes the reversible conversion of ribose-5-phosphate to ribulose 5-phosphate. In Cereibacter sphaeroides (strain ATCC 17025 / ATH 2.4.3) (Rhodobacter sphaeroides), this protein is Ribose-5-phosphate isomerase A.